The following is a 230-amino-acid chain: Isoprenyl transferase (230 aa).

The active site involves Asp14. Asp14 contributes to the Mg(2+) binding site. Residues 15–18 (GNGR), Trp19, Arg27, His31, and 59–61 (STE) each bind substrate. Asn62 serves as the catalytic Proton acceptor. Substrate contacts are provided by residues Trp63, Arg65, Arg175, and 181–183 (RIS). Glu194 is a binding site for Mg(2+).

It belongs to the UPP synthase family. In terms of assembly, homodimer. Mg(2+) is required as a cofactor.

In terms of biological role, catalyzes the condensation of isopentenyl diphosphate (IPP) with allylic pyrophosphates generating different type of terpenoids. The sequence is that of Isoprenyl transferase from Fusobacterium nucleatum subsp. nucleatum (strain ATCC 25586 / DSM 15643 / BCRC 10681 / CIP 101130 / JCM 8532 / KCTC 2640 / LMG 13131 / VPI 4355).